Consider the following 178-residue polypeptide: MSRIGKKTIVIPAGVTVTLNGSTATVKGPKGELVKEFNPEITIKIEGNEINVSRPTDNKNHRALHGTTRAILNNMVVGVSEGYEKKLELIGVGYRAQKQGDKLVLNVGYSHPVEFVAPKGVDIEVPANTQVIVKGYNKEHVGELAANIRAVRPPEPYKGKGIRYEGEHVRRKEGKTGK.

This sequence belongs to the universal ribosomal protein uL6 family. Part of the 50S ribosomal subunit.

Functionally, this protein binds to the 23S rRNA, and is important in its secondary structure. It is located near the subunit interface in the base of the L7/L12 stalk, and near the tRNA binding site of the peptidyltransferase center. The protein is Large ribosomal subunit protein uL6 of Listeria monocytogenes serotype 4a (strain HCC23).